We begin with the raw amino-acid sequence, 976 residues long: Leucine--tRNA ligase (976 aa).

Residues 1–23 (MTESPTTTPGSTSGAPSGVPSGV) show a composition bias toward low complexity. A disordered region spans residues 1–34 (MTESPTTTPGSTSGAPSGVPSGVNDAESDAPRHR). A 'HIGH' region motif is present at residues 86–97 (PYPSGEGLHVGH). The short motif at 745 to 749 (KIGKS) is the 'KMSKS' region element. K748 serves as a coordination point for ATP.

This sequence belongs to the class-I aminoacyl-tRNA synthetase family.

The protein localises to the cytoplasm. It carries out the reaction tRNA(Leu) + L-leucine + ATP = L-leucyl-tRNA(Leu) + AMP + diphosphate. This is Leucine--tRNA ligase from Mycobacterium marinum (strain ATCC BAA-535 / M).